Consider the following 43-residue polypeptide: Photosystem II reaction center protein Psb30 (43 aa).

The chain crosses the membrane as a helical span at residues 15-35; it reads VIFQLTFVSLILISGPVVIFL.

This sequence belongs to the Psb30/Ycf12 family. As to quaternary structure, PSII is composed of 1 copy each of membrane proteins PsbA, PsbB, PsbC, PsbD, PsbE, PsbF, PsbH, PsbI, PsbJ, PsbK, PsbL, PsbM, PsbT, PsbX, PsbY, PsbZ, Psb30/Ycf12, peripheral proteins PsbO, CyanoQ (PsbQ), PsbU, PsbV and a large number of cofactors. It forms dimeric complexes.

It is found in the cellular thylakoid membrane. In terms of biological role, a core subunit of photosystem II (PSII), probably helps stabilize the reaction center. This Picosynechococcus sp. (strain ATCC 27264 / PCC 7002 / PR-6) (Agmenellum quadruplicatum) protein is Photosystem II reaction center protein Psb30.